We begin with the raw amino-acid sequence, 194 residues long: tRNA(Phe) 7-((3-amino-3-carboxypropyl)-4-demethylwyosine(37)-N(4))-methyltransferase 1 (194 aa).

The protein belongs to the TYW3 family.

The catalysed reaction is 4-demethyl-7-[(3S)-3-amino-3-carboxypropyl]wyosine(37) in tRNA(Phe) + S-adenosyl-L-methionine = 7-[(3S)-3-amino-3-carboxypropyl]wyosine(37) in tRNA(Phe) + S-adenosyl-L-homocysteine + H(+). Functionally, S-adenosyl-L-methionine-dependent methyltransferase that acts as a component of the wyosine derivatives biosynthesis pathway. Probably methylates N-4 position of wybutosine-86 to produce wybutosine-72. This Pyrococcus abyssi (strain GE5 / Orsay) protein is tRNA(Phe) 7-((3-amino-3-carboxypropyl)-4-demethylwyosine(37)-N(4))-methyltransferase 1.